Reading from the N-terminus, the 148-residue chain is 3-dehydroquinate dehydratase (148 aa).

Tyrosine 23 serves as the catalytic Proton acceptor. Residues asparagine 75, histidine 81, and aspartate 88 each coordinate substrate. Histidine 101 (proton donor) is an active-site residue. Substrate is bound by residues leucine 102–serine 103 and arginine 112.

This sequence belongs to the type-II 3-dehydroquinase family. As to quaternary structure, homododecamer.

The catalysed reaction is 3-dehydroquinate = 3-dehydroshikimate + H2O. It functions in the pathway metabolic intermediate biosynthesis; chorismate biosynthesis; chorismate from D-erythrose 4-phosphate and phosphoenolpyruvate: step 3/7. In terms of biological role, catalyzes a trans-dehydration via an enolate intermediate. The chain is 3-dehydroquinate dehydratase from Xylella fastidiosa (strain 9a5c).